The sequence spans 787 residues: MLNSVKKLLGDSQKRKIKNYEQIVNDINQLESVMETLSDDELRQKTVAFQHMLQNGKTVEDIKVEAFAVVREAAKRVLGLRHYDVQLIGGLVLLEGNIAEMPTGEGKTLVSSLPTYVRALEKKGVHVITVNDYLAKRDKELIGRVHEFLGLTVGLNMSQMESIDKKRAYEADITYGIGTEFGFDYLRDNMASSKAEQVQRPFHFAIIDEIDSVLIDEAKTPLIIAGKKSSSSDFHHLCAKVMKTFQDTLHYTYDAETKACNFTEDGITKIEDLFDIDNLYDLEHQTLYHYMIQALRAHVAFQLDVDYIIEDEKIMLVDIFTGRIMDGRSLSDGLHQALEAKEGLPITDENQTQASITIQNFFRMYPALSGMTGTAKTEEKEFNRVYNMEVISIPTNRPILREDKKDVVYITADAKYKAVCAEVMNIHKKERPILIGTMSILQSETVARYLDEANLPYQLLNAKSAEQEADLIALAGKKGKITIATNMAGRGTDILLEKGVHELGGLHVIGTERHESRRVDNQLKGRAGRQGDPGSSQFFLSLEDEMIQRYAGEDVEKLKKSLKIDENGLILNNKIYDLINRTQLICEGSHFSMREYNLKLDDVINDQRNVVYKLRNNLLNEEVNMIEIVIPMIKNTLTVIAKDHLLEGMLPEEWDFTRLVEDLKAVLSTEEIPALSANNVHSAEDLQELLKDTLTSYIERVNALESDADAQQVLRQISLHFLDSGWTSHLSAMQHLKEGIGLRQYQQEDPARLYQKEGFEIFLHTFSHFEKEVALYLARYITVPQNI.

Residues Gln86, 104-108, and Asp493 each bind ATP; that span reads GEGKT.

This sequence belongs to the SecA family. Monomer and homodimer. Part of the essential Sec protein translocation apparatus which comprises SecA, SecYEG and auxiliary proteins SecDF. Other proteins may also be involved.

It localises to the cell membrane. Its subcellular location is the cytoplasm. It carries out the reaction ATP + H2O + cellular proteinSide 1 = ADP + phosphate + cellular proteinSide 2.. Functionally, part of the Sec protein translocase complex. Interacts with the SecYEG preprotein conducting channel. Has a central role in coupling the hydrolysis of ATP to the transfer of proteins into and across the cell membrane, serving as an ATP-driven molecular motor driving the stepwise translocation of polypeptide chains across the membrane. This is Protein translocase subunit SecA 2 from Bacillus thuringiensis subsp. konkukian (strain 97-27).